The following is a 128-amino-acid chain: Small ribosomal subunit protein uS9 (128 aa).

The disordered stretch occupies residues 106-128; sequence PRVVERKKPGRPKARKRFQFSKR. Positions 113-128 are enriched in basic residues; the sequence is KPGRPKARKRFQFSKR.

It belongs to the universal ribosomal protein uS9 family.

This chain is Small ribosomal subunit protein uS9, found in Porphyromonas gingivalis (strain ATCC 33277 / DSM 20709 / CIP 103683 / JCM 12257 / NCTC 11834 / 2561).